The sequence spans 633 residues: Chaperone protein HtpG (633 aa).

The interval 1 to 341 is a; substrate-binding; sequence MTAPHETMSF…SADLPLNVSR (341 aa). The tract at residues 342–562 is b; sequence ELLQESRDVK…DGDMSGYLQR (221 aa). The segment at 563–633 is c; that stretch reads LLKQAGQKAP…YVQRVNRLLA (71 aa).

Belongs to the heat shock protein 90 family. As to quaternary structure, homodimer.

It is found in the cytoplasm. Molecular chaperone. Has ATPase activity. The polypeptide is Chaperone protein HtpG (Cupriavidus metallidurans (strain ATCC 43123 / DSM 2839 / NBRC 102507 / CH34) (Ralstonia metallidurans)).